The primary structure comprises 167 residues: General odorant-binding protein 1 (167 aa).

The signal sequence occupies residues 1 to 22 (MAHTLQTVVLLLGTSILHPILA). 3 disulfide bridges follow: Cys-41–Cys-76, Cys-72–Cys-130, and Cys-119–Cys-139.

This sequence belongs to the PBP/GOBP family. As to expression, antenna.

Present in the aqueous fluid surrounding olfactory sensory dendrites and are thought to aid in the capture and transport of hydrophobic odorants into and through this fluid. In Antheraea pernyi (Chinese oak silk moth), this protein is General odorant-binding protein 1.